The sequence spans 571 residues: 15-cis-phytoene desaturase, chloroplastic/chromoplastic (571 aa).

A chloroplast and chromoplast-targeting transit peptide spans 1–96 (MDTGCLSSMN…FRNSERPSKP (96 aa)). FAD-binding positions include alanine 107, 126-127 (EA), lysine 134, 151-152 (HI), and tyrosine 157. Arginine 292 contacts substrate. FAD-binding residues include isoleucine 334 and aspartate 523. Residue alanine 531 coordinates substrate. Methionine 533 provides a ligand contact to FAD.

It belongs to the carotenoid/retinoid oxidoreductase family. In terms of assembly, homotetramer. FAD is required as a cofactor.

The protein localises to the plastid. It is found in the chloroplast. It localises to the chromoplast. The protein resides in the membrane. It carries out the reaction 2 a plastoquinone + 15-cis-phytoene = 9,9',15-tri-cis-zeta-carotene + 2 a plastoquinol. Its pathway is carotenoid biosynthesis; lycopene biosynthesis. Its function is as follows. Converts phytoene into zeta-carotene via the intermediary of phytofluene by the symmetrical introduction of two double bonds at the C-11 and C-11' positions of phytoene with a concomitant isomerization of two neighboring double bonds at the C9 and C9' positions from trans to cis. The chain is 15-cis-phytoene desaturase, chloroplastic/chromoplastic (PDS1) from Zea mays (Maize).